A 242-amino-acid chain; its full sequence is UDP-2,3-diacylglucosamine hydrolase (242 aa).

Residues Asp-7, His-9, Asp-40, Asn-78, and His-113 each contribute to the Mn(2+) site. Residue 78-79 coordinates substrate; sequence NR. Substrate-binding residues include Asp-121, Ser-159, Thr-163, Lys-166, and His-194. His-194 and His-196 together coordinate Mn(2+).

This sequence belongs to the LpxH family. Requires Mn(2+) as cofactor.

Its subcellular location is the cell inner membrane. It carries out the reaction UDP-2-N,3-O-bis[(3R)-3-hydroxytetradecanoyl]-alpha-D-glucosamine + H2O = 2-N,3-O-bis[(3R)-3-hydroxytetradecanoyl]-alpha-D-glucosaminyl 1-phosphate + UMP + 2 H(+). Its pathway is glycolipid biosynthesis; lipid IV(A) biosynthesis; lipid IV(A) from (3R)-3-hydroxytetradecanoyl-[acyl-carrier-protein] and UDP-N-acetyl-alpha-D-glucosamine: step 4/6. Hydrolyzes the pyrophosphate bond of UDP-2,3-diacylglucosamine to yield 2,3-diacylglucosamine 1-phosphate (lipid X) and UMP by catalyzing the attack of water at the alpha-P atom. Involved in the biosynthesis of lipid A, a phosphorylated glycolipid that anchors the lipopolysaccharide to the outer membrane of the cell. The chain is UDP-2,3-diacylglucosamine hydrolase from Ectopseudomonas mendocina (strain ymp) (Pseudomonas mendocina).